The following is a 140-amino-acid chain: Nucleoside diphosphate kinase (140 aa).

ATP contacts are provided by Lys11, Phe59, Arg87, Thr93, Arg104, and Asn114. Residue His117 is the Pros-phosphohistidine intermediate of the active site.

The protein belongs to the NDK family. Homotetramer. Mg(2+) is required as a cofactor.

The protein resides in the cytoplasm. The enzyme catalyses a 2'-deoxyribonucleoside 5'-diphosphate + ATP = a 2'-deoxyribonucleoside 5'-triphosphate + ADP. The catalysed reaction is a ribonucleoside 5'-diphosphate + ATP = a ribonucleoside 5'-triphosphate + ADP. Functionally, major role in the synthesis of nucleoside triphosphates other than ATP. The ATP gamma phosphate is transferred to the NDP beta phosphate via a ping-pong mechanism, using a phosphorylated active-site intermediate. This Bartonella henselae (strain ATCC 49882 / DSM 28221 / CCUG 30454 / Houston 1) (Rochalimaea henselae) protein is Nucleoside diphosphate kinase.